We begin with the raw amino-acid sequence, 109 residues long: Toxin YpjF (109 aa).

It belongs to the CbtA/YkfI/YpjF toxin family. In terms of assembly, interacts with FtsZ but not MreB. Another group finds interaction with FtsZ and MreB.

Its function is as follows. Toxic component of a type IV toxin-antitoxin (TA) system. Acts as a dual toxin inhibitor that blocks cell division and cell elongation in genetically separable interactions with FtsZ and MreB. Overexpression results in inhibition of growth in liquid cultures. Overexpression leads to formation of lemon-shaped cells; inactivated by overexpression of cognate antitoxin YfjZ but not when the 2 genes are coexpressed from the same plasmid. Also neutralized by overexpression of non-cognate antitoxins YafW and CbeA. In Escherichia coli (strain K12), this protein is Toxin YpjF (ypjF).